Consider the following 105-residue polypeptide: Large ribosomal subunit protein uL24 (105 aa).

It belongs to the universal ribosomal protein uL24 family. In terms of assembly, part of the 50S ribosomal subunit.

Functionally, one of two assembly initiator proteins, it binds directly to the 5'-end of the 23S rRNA, where it nucleates assembly of the 50S subunit. In terms of biological role, one of the proteins that surrounds the polypeptide exit tunnel on the outside of the subunit. The chain is Large ribosomal subunit protein uL24 from Xylella fastidiosa (strain M12).